The chain runs to 422 residues: L-threonine dehydratase biosynthetic IlvA (422 aa).

An N6-(pyridoxal phosphate)lysine modification is found at Lys56. Pyridoxal 5'-phosphate-binding positions include Asn83, Gly189–Leu193, and Ser315. Residues His339 to Glu413 form the ACT-like domain.

The protein belongs to the serine/threonine dehydratase family. In terms of assembly, homotetramer. Pyridoxal 5'-phosphate serves as cofactor.

The enzyme catalyses L-threonine = 2-oxobutanoate + NH4(+). Its pathway is amino-acid biosynthesis; L-isoleucine biosynthesis; 2-oxobutanoate from L-threonine: step 1/1. Its function is as follows. Catalyzes the anaerobic formation of alpha-ketobutyrate and ammonia from threonine in a two-step reaction. The first step involved a dehydration of threonine and a production of enamine intermediates (aminocrotonate), which tautomerizes to its imine form (iminobutyrate). Both intermediates are unstable and short-lived. The second step is the nonenzymatic hydrolysis of the enamine/imine intermediates to form 2-ketobutyrate and free ammonia. In the low water environment of the cell, the second step is accelerated by RidA. In Staphylococcus epidermidis (strain ATCC 12228 / FDA PCI 1200), this protein is L-threonine dehydratase biosynthetic IlvA (ilvA).